A 20-amino-acid polypeptide reads, in one-letter code: Fibrinolytic zinc metalloproteinase (20 aa).

Positions 7–20 (RYVQLVITVDHVMN) constitute a Peptidase M12B domain.

It depends on Zn(2+) as a cofactor.

Its subcellular location is the secreted. In terms of biological role, hydrolyzes alpha and beta chains of human fibrinogen and human fibrin. No activity against the gamma chain of human fibrinogen, human thrombin, bovine serum albumin, ovalbumin and hemoglobin. Has anticoagulant activity on human plasma and protects mice against death due from experimentally induced platelet thromboembolism with an ED(50) of 40 ug/kg. The protein is Fibrinolytic zinc metalloproteinase of Ganoderma lucidum (Ling zhi medicinal fungus).